We begin with the raw amino-acid sequence, 247 residues long: Coproheme decarboxylase (247 aa).

Residues arginine 129, 143–147, histidine 170, glutamine 183, and serine 221 each bind Fe-coproporphyrin III; that span reads YPMDK. Tyrosine 143 is a catalytic residue.

This sequence belongs to the ChdC family. Type 1 subfamily. Requires Fe-coproporphyrin III as cofactor.

The enzyme catalyses Fe-coproporphyrin III + 2 H2O2 + 2 H(+) = heme b + 2 CO2 + 4 H2O. It catalyses the reaction Fe-coproporphyrin III + H2O2 + H(+) = harderoheme III + CO2 + 2 H2O. It carries out the reaction harderoheme III + H2O2 + H(+) = heme b + CO2 + 2 H2O. It functions in the pathway porphyrin-containing compound metabolism; protoheme biosynthesis. Functionally, involved in coproporphyrin-dependent heme b biosynthesis. Catalyzes the decarboxylation of Fe-coproporphyrin III (coproheme) to heme b (protoheme IX), the last step of the pathway. The reaction occurs in a stepwise manner with a three-propionate intermediate. This is Coproheme decarboxylase from Bacillus cytotoxicus (strain DSM 22905 / CIP 110041 / 391-98 / NVH 391-98).